We begin with the raw amino-acid sequence, 45 residues long: Large ribosomal subunit protein bL36 (45 aa).

The segment at 1–45 (MRVSSSIKADPSKGDKLVRRKGRLYVINKKDPNRKQRQAGPARKK) is disordered.

The protein belongs to the bacterial ribosomal protein bL36 family.

This is Large ribosomal subunit protein bL36 from Chlamydia trachomatis serovar L2 (strain ATCC VR-902B / DSM 19102 / 434/Bu).